Here is a 160-residue protein sequence, read N- to C-terminus: Transcription elongation factor GreA (160 aa).

Residues 2–84 (KNTVNDKILL…SKAKIIKADL (83 aa)) are a coiled coil.

This sequence belongs to the GreA/GreB family.

Its function is as follows. Necessary for efficient RNA polymerase transcription elongation past template-encoded arresting sites. The arresting sites in DNA have the property of trapping a certain fraction of elongating RNA polymerases that pass through, resulting in locked ternary complexes. Cleavage of the nascent transcript by cleavage factors such as GreA or GreB allows the resumption of elongation from the new 3'terminus. GreA releases sequences of 2 to 3 nucleotides. The polypeptide is Transcription elongation factor GreA (Mesomycoplasma hyopneumoniae (strain 232) (Mycoplasma hyopneumoniae)).